We begin with the raw amino-acid sequence, 145 residues long: Large ribosomal subunit protein uL15 (145 aa).

Residues 20-39 form a disordered region; sequence GRVGKHRKHPSGRGNAGGEH.

Belongs to the universal ribosomal protein uL15 family.

The polypeptide is Large ribosomal subunit protein uL15 (RPL27A) (Trypanosoma brucei brucei).